Here is a 729-residue protein sequence, read N- to C-terminus: Fatty acid oxidation complex subunit alpha (729 aa).

Residues 1–189 (MLYKGDTLYL…KIGLVDGVVK (189 aa)) are enoyl-CoA hydratase/isomerase. Substrate is bound at residue aspartate 296. The interval 311–729 (ETPKQAAVLG…ARPVGDLKTA (419 aa)) is 3-hydroxyacyl-CoA dehydrogenase. Residues methionine 324, aspartate 343, 400–402 (VVE), lysine 407, and serine 429 contribute to the NAD(+) site. Histidine 450 functions as the For 3-hydroxyacyl-CoA dehydrogenase activity in the catalytic mechanism. Asparagine 453 contributes to the NAD(+) binding site. Asparagine 500 and tyrosine 660 together coordinate substrate. A disordered region spans residues 708–729 (RHNEPYYPPVEPARPVGDLKTA).

In the N-terminal section; belongs to the enoyl-CoA hydratase/isomerase family. It in the C-terminal section; belongs to the 3-hydroxyacyl-CoA dehydrogenase family. In terms of assembly, heterotetramer of two alpha chains (FadB) and two beta chains (FadA).

It catalyses the reaction a (3S)-3-hydroxyacyl-CoA + NAD(+) = a 3-oxoacyl-CoA + NADH + H(+). The catalysed reaction is a (3S)-3-hydroxyacyl-CoA = a (2E)-enoyl-CoA + H2O. The enzyme catalyses a 4-saturated-(3S)-3-hydroxyacyl-CoA = a (3E)-enoyl-CoA + H2O. It carries out the reaction (3S)-3-hydroxybutanoyl-CoA = (3R)-3-hydroxybutanoyl-CoA. It catalyses the reaction a (3Z)-enoyl-CoA = a 4-saturated (2E)-enoyl-CoA. The catalysed reaction is a (3E)-enoyl-CoA = a 4-saturated (2E)-enoyl-CoA. It participates in lipid metabolism; fatty acid beta-oxidation. Involved in the aerobic and anaerobic degradation of long-chain fatty acids via beta-oxidation cycle. Catalyzes the formation of 3-oxoacyl-CoA from enoyl-CoA via L-3-hydroxyacyl-CoA. It can also use D-3-hydroxyacyl-CoA and cis-3-enoyl-CoA as substrate. The chain is Fatty acid oxidation complex subunit alpha from Escherichia coli (strain K12 / MC4100 / BW2952).